The chain runs to 334 residues: tRNA-dihydrouridine synthase B (334 aa).

FMN is bound by residues 16–18 (PMA) and Gln-70. Cys-100 acts as the Proton donor in catalysis. FMN contacts are provided by residues Lys-139, 200–202 (NGD), and 224–225 (GR).

The protein belongs to the Dus family. DusB subfamily. FMN serves as cofactor.

The catalysed reaction is a 5,6-dihydrouridine in tRNA + NAD(+) = a uridine in tRNA + NADH + H(+). It carries out the reaction a 5,6-dihydrouridine in tRNA + NADP(+) = a uridine in tRNA + NADPH + H(+). Its function is as follows. Catalyzes the synthesis of 5,6-dihydrouridine (D), a modified base found in the D-loop of most tRNAs, via the reduction of the C5-C6 double bond in target uridines. The protein is tRNA-dihydrouridine synthase B of Serratia marcescens.